Here is a 121-residue protein sequence, read N- to C-terminus: Large ribosomal subunit protein bL12 (121 aa).

It belongs to the bacterial ribosomal protein bL12 family. Homodimer. Part of the ribosomal stalk of the 50S ribosomal subunit. Forms a multimeric L10(L12)X complex, where L10 forms an elongated spine to which 2 to 4 L12 dimers bind in a sequential fashion. Binds GTP-bound translation factors.

In terms of biological role, forms part of the ribosomal stalk which helps the ribosome interact with GTP-bound translation factors. Is thus essential for accurate translation. The protein is Large ribosomal subunit protein bL12 of Leuconostoc citreum (strain KM20).